The sequence spans 580 residues: Benzoate--CoA ligase, peroxisomal (580 aa).

The short motif at 578–580 is the Microbody targeting signal element; that stretch reads SRL.

The protein belongs to the ATP-dependent AMP-binding enzyme family.

The protein resides in the peroxisome. It catalyses the reaction benzoate + ATP + CoA = benzoyl-CoA + AMP + diphosphate. Functionally, benzoate--CoA ligase involved in benzoyloxyglucosinolate biosynthesis in seeds. Glucosinolates are secondary metabolites involved in pathogen and insect defense of cruciferous plants. The chain is Benzoate--CoA ligase, peroxisomal (AAE20) from Arabidopsis thaliana (Mouse-ear cress).